Reading from the N-terminus, the 466-residue chain is Adenosylhomocysteinase (466 aa).

Positions 57, 132, and 192 each coordinate substrate. Position 193 to 195 (193 to 195) interacts with NAD(+); the sequence is TTT. 2 residues coordinate substrate: K222 and D226. NAD(+) is bound by residues N227, 256–261, E279, N314, 335–337, and N380; these read GYGDVG and IGH.

The protein belongs to the adenosylhomocysteinase family. NAD(+) serves as cofactor.

Its subcellular location is the cytoplasm. The catalysed reaction is S-adenosyl-L-homocysteine + H2O = L-homocysteine + adenosine. It participates in amino-acid biosynthesis; L-homocysteine biosynthesis; L-homocysteine from S-adenosyl-L-homocysteine: step 1/1. Functionally, may play a key role in the regulation of the intracellular concentration of adenosylhomocysteine. This Rhizobium leguminosarum bv. trifolii (strain WSM2304) protein is Adenosylhomocysteinase.